Consider the following 291-residue polypeptide: Pyridoxal 5'-phosphate synthase subunit PdxS (291 aa).

Asp-23 provides a ligand contact to D-ribose 5-phosphate. Lys-80 serves as the catalytic Schiff-base intermediate with D-ribose 5-phosphate. A D-ribose 5-phosphate-binding site is contributed by Gly-152. Position 164 (Arg-164) interacts with D-glyceraldehyde 3-phosphate. Residues Gly-213 and 234–235 contribute to the D-ribose 5-phosphate site; that span reads GS.

It belongs to the PdxS/SNZ family. As to quaternary structure, in the presence of PdxT, forms a dodecamer of heterodimers.

The enzyme catalyses aldehydo-D-ribose 5-phosphate + D-glyceraldehyde 3-phosphate + L-glutamine = pyridoxal 5'-phosphate + L-glutamate + phosphate + 3 H2O + H(+). The protein operates within cofactor biosynthesis; pyridoxal 5'-phosphate biosynthesis. Catalyzes the formation of pyridoxal 5'-phosphate from ribose 5-phosphate (RBP), glyceraldehyde 3-phosphate (G3P) and ammonia. The ammonia is provided by the PdxT subunit. Can also use ribulose 5-phosphate and dihydroxyacetone phosphate as substrates, resulting from enzyme-catalyzed isomerization of RBP and G3P, respectively. The polypeptide is Pyridoxal 5'-phosphate synthase subunit PdxS (Streptococcus pneumoniae (strain P1031)).